The primary structure comprises 575 residues: Cytoskeleton-associated protein 4 (575 aa).

A disordered region spans residues 1-73; the sequence is MPSAKQRGSK…RGRSSAATAN (73 aa). At 1–85 the chain is on the cytoplasmic side; sequence MPSAKQRGSK…SASCSRRLGR (85 aa). 3 positions are modified to phosphoserine: Ser-3, Ser-17, and Ser-19. At Lys-21 the chain carries N6-acetyllysine. Over residues 37 to 53 the composition is skewed to pro residues; it reads PAAPQQPQPPAPHPPQH. Residue Cys-79 is the site of S-palmitoyl cysteine; by ZDHHC2 attachment. A helical membrane pass occupies residues 86-108; that stretch reads VLNFLFYLSLVAAAAFSGWYVHH. Topologically, residues 109–575 are extracellular; sequence VLEEVQQVRR…LKVEKIHEKI (467 aa). Positions 125–193 form a coiled coil; sequence RQRDELGQGL…QKLQNEILKD (69 aa). 3 positions are modified to phosphoserine: Ser-211, Ser-292, and Ser-367. 2 coiled-coil regions span residues 236–438 and 507–575; these read DVQK…VGNL and SSLD…HEKI.

As to quaternary structure, interacts with REEP5. In terms of processing, reversibly palmitoylated. Palmitoylation at Cys-79 by DHHC2 is required for its trafficking from the ER to the plasma membrane and for its perinuclear localization. Increased phosphorylation during mitosis prevents binding to microtubules. In terms of tissue distribution, expressed in cardiomyocytes (at protein level).

It localises to the endoplasmic reticulum membrane. The protein localises to the cell membrane. Its subcellular location is the cytoplasm. It is found in the cytoskeleton. The protein resides in the perinuclear region. Functionally, high-affinity epithelial cell surface receptor for APF. Mediates the anchoring of the endoplasmic reticulum to microtubules. The chain is Cytoskeleton-associated protein 4 (Ckap4) from Mus musculus (Mouse).